Consider the following 397-residue polypeptide: Mannan endo-1,4-beta-mannosidase 1 (397 aa).

The first 23 residues, 1-23 (MSYARRSCICGLFLLFLALVCEA), serve as a signal peptide directing secretion. Substrate is bound by residues tryptophan 83 and asparagine 198. Residue glutamate 199 is the Proton donor of the active site. Substrate is bound at residue tyrosine 276. The Nucleophile role is filled by glutamate 316. A substrate-binding site is contributed by tryptophan 354.

Belongs to the glycosyl hydrolase 5 (cellulase A) family.

Its subcellular location is the secreted. It carries out the reaction Random hydrolysis of (1-&gt;4)-beta-D-mannosidic linkages in mannans, galactomannans and glucomannans.. This is Mannan endo-1,4-beta-mannosidase 1 (MAN1) from Solanum lycopersicum (Tomato).